The chain runs to 175 residues: ATP synthase subunit b (175 aa).

The helical transmembrane segment at 24–44 threads the bilayer; sequence LVLWQIAATVILIIVVRIFLW.

It belongs to the ATPase B chain family. As to quaternary structure, F-type ATPases have 2 components, F(1) - the catalytic core - and F(0) - the membrane proton channel. F(1) has five subunits: alpha(3), beta(3), gamma(1), delta(1), epsilon(1). F(0) has three main subunits: a(1), b(2) and c(10-14). The alpha and beta chains form an alternating ring which encloses part of the gamma chain. F(1) is attached to F(0) by a central stalk formed by the gamma and epsilon chains, while a peripheral stalk is formed by the delta and b chains.

It localises to the cell membrane. F(1)F(0) ATP synthase produces ATP from ADP in the presence of a proton or sodium gradient. F-type ATPases consist of two structural domains, F(1) containing the extramembraneous catalytic core and F(0) containing the membrane proton channel, linked together by a central stalk and a peripheral stalk. During catalysis, ATP synthesis in the catalytic domain of F(1) is coupled via a rotary mechanism of the central stalk subunits to proton translocation. Its function is as follows. Component of the F(0) channel, it forms part of the peripheral stalk, linking F(1) to F(0). The protein is ATP synthase subunit b of Acholeplasma laidlawii (strain PG-8A).